Here is a 62-residue protein sequence, read N- to C-terminus: Large ribosomal subunit protein bL28 (62 aa).

Belongs to the bacterial ribosomal protein bL28 family.

The chain is Large ribosomal subunit protein bL28 from Aliarcobacter butzleri (strain RM4018) (Arcobacter butzleri).